We begin with the raw amino-acid sequence, 421 residues long: Histidine--tRNA ligase (421 aa).

Belongs to the class-II aminoacyl-tRNA synthetase family. As to quaternary structure, homodimer.

Its subcellular location is the cytoplasm. It catalyses the reaction tRNA(His) + L-histidine + ATP = L-histidyl-tRNA(His) + AMP + diphosphate + H(+). The chain is Histidine--tRNA ligase from Francisella tularensis subsp. holarctica (strain LVS).